The primary structure comprises 167 residues: NAD(P)H-quinone oxidoreductase subunit I, chloroplastic (167 aa).

4Fe-4S ferredoxin-type domains follow at residues G55 to K84 and L95 to E124. Residues C64, C67, C70, C74, C104, C107, C110, and C114 each contribute to the [4Fe-4S] cluster site.

Belongs to the complex I 23 kDa subunit family. As to quaternary structure, NDH is composed of at least 16 different subunits, 5 of which are encoded in the nucleus. The cofactor is [4Fe-4S] cluster.

It localises to the plastid. Its subcellular location is the chloroplast thylakoid membrane. It carries out the reaction a plastoquinone + NADH + (n+1) H(+)(in) = a plastoquinol + NAD(+) + n H(+)(out). The enzyme catalyses a plastoquinone + NADPH + (n+1) H(+)(in) = a plastoquinol + NADP(+) + n H(+)(out). In terms of biological role, NDH shuttles electrons from NAD(P)H:plastoquinone, via FMN and iron-sulfur (Fe-S) centers, to quinones in the photosynthetic chain and possibly in a chloroplast respiratory chain. The immediate electron acceptor for the enzyme in this species is believed to be plastoquinone. Couples the redox reaction to proton translocation, and thus conserves the redox energy in a proton gradient. The sequence is that of NAD(P)H-quinone oxidoreductase subunit I, chloroplastic from Citrus sinensis (Sweet orange).